The primary structure comprises 488 residues: MHAGAFINFVWALSLVSLLAAVPPSPSFSLKNLPSTACRLPPAVSEKRCRTPDGSICSGRGSCDCGICLCEVKEAGKYYGPLCECHDWVCHTYDGQVCAGHGQCDCGVCKCDVGWSGEACQYPTTCDLTRKKSNEMCKNSQAVICSNAGTCQCGRCKCENSDNSGLIYGKYCECDDTECFDDETQEICGGHGKCYCGNCYCEAGWHGDKCEFQCDITPWEIKKRCTSPDGKICSNRGTCVCGECTCHDVDPTGDWGDIHGDTCECDERNCKSVYDRYSDDFCSGHGQCNCGRCDCKDGWTGRKCEHPRACALSIEESKKKCQGSASQPCSGRGKCECGQCTCFPPGDSKVYGKNCECDDRQCEDLEGKICGEHGTCSCGRCICEAGWFGKLCQHERKCNMTEEESKSQCESDDGILCSGKGSCHCGKCICSPQEWYVSGEFCECDDRDCDKHDGLICTGNGICNCGNCECWEGWNGNACEIWLGSEYP.

The N-terminal stretch at 1–21 (MHAGAFINFVWALSLVSLLAA) is a signal peptide. Cystine bridges form between C38–C65, C49–C63, C57–C68, C70–C83, C85–C106, C90–C104, C98–C109, C111–C120, C126–C153, C137–C151, C145–C156, C158–C172, C174–C196, C179–C194, C188–C199, C201–C210, C214–C241, C225–C239, C233–C244, C246–C263, C265–C290, C270–C288, C282–C293, C295–C304, C310–C337, C321–C335, C329–C340, C342–C355, C357–C378, C362–C376, C370–C381, C383–C392, C398–C425, C409–C423, C417–C428, C430–C442, C444–C465, C449–C463, C457–C468, and C470–C479. I-EGF domains lie at 38 to 84 (CRLP…PLCE), 85 to 121 (CHDW…EACQ), 126 to 173 (CDLT…KYCE), 174 to 211 (CDDT…DKCE), 214 to 264 (CDIT…DTCE), 265 to 305 (CDER…RKCE), 310 to 356 (CALS…KNCE), 357 to 393 (CDDR…KLCQ), 398 to 443 (CNMT…EFCE), and 444 to 480 (CDDR…NACE). One copy of the I repeat lies at 49–89 (CRTPDGSICSGRGSCDCGICLCEVKEAGKYYGPLCECHDWV). Residues 49 to 488 (CRTPDGSICS…CEIWLGSEYP (440 aa)) form a cysteine-rich tandem repeats region. Residues 90–136 (CHTYDGQVCAGHGQCDCGVCKCDVGWSGEACQYPTTCDLTRKKSNEM) form an II repeat. The stretch at 137–178 (CKNSQAVICSNAGTCQCGRCKCENSDNSGLIYGKYCECDDTE) is one III repeat. An IV repeat occupies 179-224 (CFDDETQEICGGHGKCYCGNCYCEAGWHGDKCEFQCDITPWEIKKR). Residues 225-269 (CTSPDGKICSNRGTCVCGECTCHDVDPTGDWGDIHGDTCECDERN) form a V repeat. The VI repeat unit spans residues 270–320 (CKSVYDRYSDDFCSGHGQCNCGRCDCKDGWTGRKCEHPRACALSIEESKKK). The stretch at 321-361 (CQGSASQPCSGRGKCECGQCTCFPPGDSKVYGKNCECDDRQ) is one VII repeat. One copy of the VIII repeat lies at 362 to 408 (CEDLEGKICGEHGTCSCGRCICEAGWFGKLCQHERKCNMTEEESKSQ). N399 carries N-linked (GlcNAc...) asparagine glycosylation. One copy of the IX repeat lies at 409 to 448 (CESDDGILCSGKGSCHCGKCICSPQEWYVSGEFCECDDRD). One copy of the X repeat lies at 449-488 (CDKHDGLICTGNGICNCGNCECWEGWNGNACEIWLGSEYP).

The protein localises to the secreted. This chain is Integrin beta-like protein 1 (itgbl1), found in Xenopus laevis (African clawed frog).